The chain runs to 221 residues: 7-cyano-7-deazaguanine synthase (221 aa).

8–18 is an ATP binding site; that stretch reads LSGGMDSAAVI. Residues C186, C196, C199, and C202 each coordinate Zn(2+).

This sequence belongs to the QueC family. Requires Zn(2+) as cofactor.

It carries out the reaction 7-carboxy-7-deazaguanine + NH4(+) + ATP = 7-cyano-7-deazaguanine + ADP + phosphate + H2O + H(+). It functions in the pathway purine metabolism; 7-cyano-7-deazaguanine biosynthesis. Functionally, catalyzes the ATP-dependent conversion of 7-carboxy-7-deazaguanine (CDG) to 7-cyano-7-deazaguanine (preQ(0)). This is 7-cyano-7-deazaguanine synthase from Stenotrophomonas maltophilia (strain R551-3).